Reading from the N-terminus, the 463-residue chain is Hydroxyacid-oxoacid transhydrogenase, mitochondrial (463 aa).

Belongs to the iron-containing alcohol dehydrogenase family. Hydroxyacid-oxoacid transhydrogenase subfamily.

Its subcellular location is the mitochondrion. It carries out the reaction (S)-3-hydroxybutanoate + 2-oxoglutarate = (R)-2-hydroxyglutarate + acetoacetate. The catalysed reaction is 4-hydroxybutanoate + 2-oxoglutarate = (R)-2-hydroxyglutarate + succinate semialdehyde. In terms of biological role, catalyzes the cofactor-independent reversible oxidation of gamma-hydroxybutyrate (GHB) to succinic semialdehyde (SSA) coupled to reduction of 2-ketoglutarate (2-KG) to D-2-hydroxyglutarate (D-2-HG). L-3-hydroxybutyrate (L-3-OHB) is also a substrate for HOT when using 2-KG as hydrogen acceptor, resulting in the formation of D-2-HG. The polypeptide is Hydroxyacid-oxoacid transhydrogenase, mitochondrial (adhfe1) (Xenopus tropicalis (Western clawed frog)).